The following is a 338-amino-acid chain: N-acetyl-gamma-glutamyl-phosphate reductase (338 aa).

Cys148 is a catalytic residue.

It belongs to the NAGSA dehydrogenase family. Type 1 subfamily.

The protein localises to the cytoplasm. The catalysed reaction is N-acetyl-L-glutamate 5-semialdehyde + phosphate + NADP(+) = N-acetyl-L-glutamyl 5-phosphate + NADPH + H(+). It functions in the pathway amino-acid biosynthesis; L-arginine biosynthesis; N(2)-acetyl-L-ornithine from L-glutamate: step 3/4. In terms of biological role, catalyzes the NADPH-dependent reduction of N-acetyl-5-glutamyl phosphate to yield N-acetyl-L-glutamate 5-semialdehyde. The polypeptide is N-acetyl-gamma-glutamyl-phosphate reductase (Leptospira borgpetersenii serovar Hardjo-bovis (strain JB197)).